A 315-amino-acid polypeptide reads, in one-letter code: Putative steroid dehydrogenase 2 (315 aa).

Residue 47-76 (ASWAVVTGATDGIGKSYSFELARRGFNVYI) coordinates NADP(+). Tyrosine 202 is a catalytic residue.

The protein belongs to the short-chain dehydrogenases/reductases (SDR) family. 17-beta-HSD 3 subfamily.

The sequence is that of Putative steroid dehydrogenase 2 (stdh-2) from Caenorhabditis elegans.